Here is a 469-residue protein sequence, read N- to C-terminus: 3-isopropylmalate dehydratase large subunit (469 aa).

Positions 350, 410, and 413 each coordinate [4Fe-4S] cluster.

The protein belongs to the aconitase/IPM isomerase family. LeuC type 1 subfamily. Heterodimer of LeuC and LeuD. [4Fe-4S] cluster serves as cofactor.

The catalysed reaction is (2R,3S)-3-isopropylmalate = (2S)-2-isopropylmalate. The protein operates within amino-acid biosynthesis; L-leucine biosynthesis; L-leucine from 3-methyl-2-oxobutanoate: step 2/4. Its function is as follows. Catalyzes the isomerization between 2-isopropylmalate and 3-isopropylmalate, via the formation of 2-isopropylmaleate. The polypeptide is 3-isopropylmalate dehydratase large subunit (Brucella anthropi (strain ATCC 49188 / DSM 6882 / CCUG 24695 / JCM 21032 / LMG 3331 / NBRC 15819 / NCTC 12168 / Alc 37) (Ochrobactrum anthropi)).